A 376-amino-acid chain; its full sequence is 28S rRNA (uridine-N(3))-methyltransferase (376 aa).

Disordered stretches follow at residues 1 to 33 (MAERGRKRPCGPGEHGQRIEWRKWKQQKKEEKK) and 49 to 71 (AQEEQAKRLEEEEAAAEKEDRGR). Residues 15 to 33 (HGQRIEWRKWKQQKKEEKK) show a composition bias toward basic and acidic residues. 5 residues coordinate S-adenosyl-L-homocysteine: threonine 289, arginine 292, glycine 312, asparagine 341, and threonine 342. Residues arginine 292, glycine 312, asparagine 341, and threonine 342 each coordinate S-adenosyl-L-methionine.

It belongs to the class IV-like SAM-binding methyltransferase superfamily. In terms of assembly, interacts with INCA1.

The protein resides in the cytoplasm. The protein localises to the cytoskeleton. Its subcellular location is the spindle. It is found in the chromosome. It localises to the centromere. The protein resides in the kinetochore. The protein localises to the microtubule organizing center. Its subcellular location is the centrosome. The enzyme catalyses uridine in 28S rRNA + S-adenosyl-L-methionine = N(3)-methyluridine in 28S rRNA + S-adenosyl-L-homocysteine + H(+). In terms of biological role, S-adenosyl-L-methionine-dependent methyltransferase that specifically methylates the N3 position of a uridine in 28S rRNA. Required for association of the centrosomes with the poles of the bipolar mitotic spindle during metaphase. Also involved in chromosome alignment. May promote centrosome maturation probably by recruiting A-kinase anchor protein AKAP9 to centrosomes in early mitosis. Binds specifically to miRNA MIR145 hairpin, regulates MIR145 expression at a postranscriptional level. The sequence is that of 28S rRNA (uridine-N(3))-methyltransferase from Homo sapiens (Human).